The chain runs to 328 residues: N-acetyl-gamma-glutamyl-phosphate reductase (328 aa).

The active site involves Cys143.

Belongs to the NAGSA dehydrogenase family. Type 1 subfamily.

Its subcellular location is the cytoplasm. The catalysed reaction is N-acetyl-L-glutamate 5-semialdehyde + phosphate + NADP(+) = N-acetyl-L-glutamyl 5-phosphate + NADPH + H(+). It participates in amino-acid biosynthesis; L-arginine biosynthesis; N(2)-acetyl-L-ornithine from L-glutamate: step 3/4. Catalyzes the NADPH-dependent reduction of N-acetyl-5-glutamyl phosphate to yield N-acetyl-L-glutamate 5-semialdehyde. This Methanoregula boonei (strain DSM 21154 / JCM 14090 / 6A8) protein is N-acetyl-gamma-glutamyl-phosphate reductase.